The following is a 1442-amino-acid chain: Death-associated protein kinase 1 (1442 aa).

A Protein kinase domain is found at 13–275 (YDTGEELGSG…IQDSLQHPWI (263 aa)). ATP is bound by residues 19–27 (LGSGQFAVV) and Lys-42. Asp-139 acts as the Proton acceptor in catalysis. Positions 267–334 (QDSLQHPWIK…RSNMSVARSD (68 aa)) are calmodulin-binding. Ser-289 carries the phosphoserine; by RPS6KA1 and RPS6KA3 modification. Residues 292–301 (NMEKFKKFAA) form an autoinhibitory domain region. Ser-308 is subject to Phosphoserine; by autocatalysis. 2 positions are modified to phosphoserine: Ser-319 and Ser-333. ANK repeat units lie at residues 378–407 (HGTPPLLIAAGCGNIQMLQLLIKRGSRIDV), 411–440 (GGSNAIYWASRHGHVDTLKFLNENKCPLDV), 444–473 (SGETALHVAARYGHADVVQLLCSFGSNPDF), 477–506 (EEETPLHCAAWHGYYSVAKALCEVGCNVNI), 510–539 (EGETPLLTASARGYHDIVECLAEHGADLNA), 543–572 (DGHIALHLAVRRCQMEVIKTLLGHGSFVDF), 576–605 (HGNTPLHVACKDGSAPIVVALCEASCNLDI), and 609–638 (YGRTPLHLAANNGILDVVRYLCLMGANVEA). Residues 681–955 (TQNLQPRIKL…NHLQEIRSQI (275 aa)) enclose the Roc domain. Position 734 is a phosphoserine; by MAPK1 (Ser-734). One copy of the ANK 9 repeat lies at 875 to 904 (KLKNPLRVVLVATHADIMNIPRPAGGEFGY). Ser-1115 is subject to Phosphoserine. An ANK 10 repeat occupies 1164–1196 (DADIRLWVSGCRIANRGAELLVLLVNHGQGIEV). The 85-residue stretch at 1312 to 1396 (KLSRLLDPPD…DAADFLLKAS (85 aa)) folds into the Death domain. Phosphoserine is present on Ser-1433.

It belongs to the protein kinase superfamily. CAMK Ser/Thr protein kinase family. DAP kinase subfamily. Interacts with KLHL20. Interacts (via death domain) with MAPK1 and MAPK3. Interacts with MAP1B (via N-terminus). Interacts with PRKD1 in an oxidative stress-regulated manner. Interacts with PIN1, PDCD6, BECN1, TSC2 and STX1A. Interacts (via kinase domain) with DAPK3 (via kinase domain). Interacts with GRINB. Interacts (via death domain) with UNC5B (via death domain). Interacts with UNC5C (via death domain). It depends on Mg(2+) as a cofactor. Ubiquitinated by the BCR(KLHL20) E3 ubiquitin ligase complex, leading to its degradation by the proteasome. In terms of processing, in response to mitogenic stimulation (PMA or EGF), phosphorylated at Ser-289; phosphorylation suppresses DAPK1 pro-apoptotic function. Autophosphorylation at Ser-308 inhibits its catalytic activity. Phosphorylation at Ser-734 by MAPK1 increases its catalytic activity and promotes cytoplasmic retention of MAPK1. Endoplasmic-stress can cause dephosphorylation at Ser-308. As to expression, high levels in bladder, uterus, vas deferens, lung, liver and kidney.

The catalysed reaction is L-seryl-[protein] + ATP = O-phospho-L-seryl-[protein] + ADP + H(+). It catalyses the reaction L-threonyl-[protein] + ATP = O-phospho-L-threonyl-[protein] + ADP + H(+). Activated by Ca(2+)/calmodulin. Regulated by a locking mechanism, involving autophosphorylation at Ser-308 and calmodulin binding. In the inactive state, Ser-308 is phosphorylated. Activation involves its dephosphorylation and a release-of-autoinhibition mechanism where binding of calmodulin induces a conformational change that relieves the steric block of the active site by the autoinhibitory domain. Activity is modulated by UNC5B and NTN1. UNC5B activates it by inhibiting the phosphorylation at Ser-308, whereas NTN1 inhibits UNC5B-mediated activation of DAPK1. Endoplasmic-stress activates by causing Ser-308 dephosphorylation. Its function is as follows. Calcium/calmodulin-dependent serine/threonine kinase involved in multiple cellular signaling pathways that trigger cell survival, apoptosis, and autophagy. Regulates both type I apoptotic and type II autophagic cell deaths signal, depending on the cellular setting. The former is caspase-dependent, while the latter is caspase-independent and is characterized by the accumulation of autophagic vesicles. Phosphorylates PIN1 resulting in inhibition of its catalytic activity, nuclear localization, and cellular function. Phosphorylates TPM1, enhancing stress fiber formation in endothelial cells. Phosphorylates STX1A and significantly decreases its binding to STXBP1. Phosphorylates PRKD1 and regulates JNK signaling by binding and activating PRKD1 under oxidative stress. Phosphorylates BECN1, reducing its interaction with BCL2 and BCL2L1 and promoting the induction of autophagy. Phosphorylates TSC2, disrupting the TSC1-TSC2 complex and stimulating mTORC1 activity in a growth factor-dependent pathway. Phosphorylates RPS6, MYL9 and DAPK3. Acts as a signaling amplifier of NMDA receptors at extrasynaptic sites for mediating brain damage in stroke. Cerebral ischemia recruits DAPK1 into the NMDA receptor complex and it phosphorylates GRINB at Ser-1303 inducing injurious Ca(2+) influx through NMDA receptor channels, resulting in an irreversible neuronal death. Required together with DAPK3 for phosphorylation of RPL13A upon interferon-gamma activation which is causing RPL13A involvement in transcript-selective translation inhibition. This chain is Death-associated protein kinase 1 (Dapk1), found in Mus musculus (Mouse).